The sequence spans 43 residues: Protein PsbN (43 aa).

The chain crosses the membrane as a helical span at residues 5–27; that stretch reads TLIAISISGLIVSFTGYALYTAF.

It belongs to the PsbN family.

It localises to the plastid. The protein resides in the chloroplast thylakoid membrane. Its function is as follows. May play a role in photosystem I and II biogenesis. This Cicer arietinum (Chickpea) protein is Protein PsbN.